Reading from the N-terminus, the 392-residue chain is Stilbene synthase 2 (392 aa).

55 to 58 (KFNR) contacts substrate. Cysteine 164 is a catalytic residue. Substrate-binding positions include leucine 267 and 305-307 (GGP).

It belongs to the thiolase-like superfamily. Chalcone/stilbene synthases family. Homodimer.

The protein localises to the cytoplasm. It carries out the reaction 4-coumaroyl-CoA + 3 malonyl-CoA + 3 H(+) = trans-resveratrol + 4 CO2 + 4 CoA. The protein operates within phytoalexin biosynthesis; 3,4',5-trihydroxystilbene biosynthesis; 3,4',5-trihydroxystilbene from trans-4-coumarate: step 2/2. Functionally, mediates resistance to pathogens which are sensitive to stilbenes. The polypeptide is Stilbene synthase 2 (Vitis vinifera (Grape)).